The chain runs to 212 residues: Transcriptional regulator GfcR (212 aa).

A disordered region spans residues 38–60 (LVERSGTGTEPDTSDDGGPHDIH).

It belongs to the purine/pyrimidine phosphoribosyltransferase family. GfcR subfamily.

Functionally, DNA-binding transcriptional regulator that functions as a regulator of central sugar catabolic pathways. The sequence is that of Transcriptional regulator GfcR from Haloarcula marismortui (strain ATCC 43049 / DSM 3752 / JCM 8966 / VKM B-1809) (Halobacterium marismortui).